Here is a 293-residue protein sequence, read N- to C-terminus: Elongation factor Ts (293 aa).

Positions 80 to 83 are involved in Mg(2+) ion dislocation from EF-Tu; the sequence is TDFV.

This sequence belongs to the EF-Ts family.

It is found in the cytoplasm. Functionally, associates with the EF-Tu.GDP complex and induces the exchange of GDP to GTP. It remains bound to the aminoacyl-tRNA.EF-Tu.GTP complex up to the GTP hydrolysis stage on the ribosome. This is Elongation factor Ts from Paraburkholderia phymatum (strain DSM 17167 / CIP 108236 / LMG 21445 / STM815) (Burkholderia phymatum).